The chain runs to 545 residues: Capsular polysaccharide phosphotransferase SacB (545 aa).

Belongs to the stealth family.

In terms of biological role, may be the polymerase that links individual UDP-N-acetyl-D-mannosamine monomers. In serotype A the capsule is composed of repeated units of (alpha 1-6)-linked N-acetyl-D-mannosamine-1-phosphate. The protein is Capsular polysaccharide phosphotransferase SacB (sacB) of Neisseria meningitidis serogroup A.